We begin with the raw amino-acid sequence, 89 residues long: Small ribosomal subunit protein uS14 (89 aa).

It belongs to the universal ribosomal protein uS14 family. In terms of assembly, part of the 30S ribosomal subunit. Contacts proteins S3 and S10.

Its function is as follows. Binds 16S rRNA, required for the assembly of 30S particles and may also be responsible for determining the conformation of the 16S rRNA at the A site. The chain is Small ribosomal subunit protein uS14 from Akkermansia muciniphila (strain ATCC BAA-835 / DSM 22959 / JCM 33894 / BCRC 81048 / CCUG 64013 / CIP 107961 / Muc).